The chain runs to 361 residues: Phospho-N-acetylmuramoyl-pentapeptide-transferase (361 aa).

The next 10 helical transmembrane spans lie at 21-41 (YITLRAVLATLTALTISFLVG), 73-93 (TMGGALILIAIVISTLLWADL), 97-117 (FVWVVLITTLGFGVIGWVDDW), 134-154 (YFWQSLIGAGVAAYLFHTATV), 168-188 (LVLPLGAVSFIVLTYFVIVGT), 200-220 (GLAIMPTVMVASALAVFAYVA), 237-257 (AGELTVFCAAIGGAGLGFLWF), 264-284 (VFMGDVGALALGAALGTVAVI), 289-309 (IVLFIMGGVFVMETISVMLQV), and 338-358 (QVVVRFWIITMMLVLVGLSTL).

Belongs to the glycosyltransferase 4 family. MraY subfamily. Mg(2+) is required as a cofactor.

It localises to the cell inner membrane. The enzyme catalyses UDP-N-acetyl-alpha-D-muramoyl-L-alanyl-gamma-D-glutamyl-meso-2,6-diaminopimeloyl-D-alanyl-D-alanine + di-trans,octa-cis-undecaprenyl phosphate = di-trans,octa-cis-undecaprenyl diphospho-N-acetyl-alpha-D-muramoyl-L-alanyl-D-glutamyl-meso-2,6-diaminopimeloyl-D-alanyl-D-alanine + UMP. It participates in cell wall biogenesis; peptidoglycan biosynthesis. Functionally, catalyzes the initial step of the lipid cycle reactions in the biosynthesis of the cell wall peptidoglycan: transfers peptidoglycan precursor phospho-MurNAc-pentapeptide from UDP-MurNAc-pentapeptide onto the lipid carrier undecaprenyl phosphate, yielding undecaprenyl-pyrophosphoryl-MurNAc-pentapeptide, known as lipid I. The sequence is that of Phospho-N-acetylmuramoyl-pentapeptide-transferase from Methylobacillus flagellatus (strain ATCC 51484 / DSM 6875 / VKM B-1610 / KT).